The chain runs to 306 residues: NAD-dependent protein deacylase (306 aa).

One can recognise a Deacetylase sirtuin-type domain in the interval 1 to 305 (MNKQLKEFQE…PIALKPLIGD (305 aa)). 23–42 (GAGLSASSGLPTFRGSQGLW) contacts NAD(+). 2 residues coordinate substrate: tyrosine 67 and arginine 70. NAD(+) is bound at residue 103–106 (QNVD). Histidine 123 serves as the catalytic Proton acceptor. Zn(2+) is bound by residues cysteine 131, cysteine 136, cysteine 200, and cysteine 203. Residues 243–245 (GTS), 269–271 (NTD), and alanine 291 contribute to the NAD(+) site.

The protein belongs to the sirtuin family. Class III subfamily. Zn(2+) is required as a cofactor.

It is found in the mitochondrion. The enzyme catalyses N(6)-malonyl-L-lysyl-[protein] + NAD(+) + H2O = 2''-O-malonyl-ADP-D-ribose + nicotinamide + L-lysyl-[protein]. It carries out the reaction N(6)-succinyl-L-lysyl-[protein] + NAD(+) + H2O = 2''-O-succinyl-ADP-D-ribose + nicotinamide + L-lysyl-[protein]. The catalysed reaction is N(6)-glutaryl-L-lysyl-[protein] + NAD(+) + H2O = 2''-O-glutaryl-ADP-D-ribose + nicotinamide + L-lysyl-[protein]. Functionally, NAD-dependent lysine demalonylase, desuccinylase and deglutarylase that specifically removes malonyl, succinyl and glutaryl groups on target proteins. Has weak NAD-dependent protein deacetylase activity; however this activity may not be physiologically relevant in vivo. The chain is NAD-dependent protein deacylase from Candida albicans (strain SC5314 / ATCC MYA-2876) (Yeast).